Here is an 872-residue protein sequence, read N- to C-terminus: Alanine--tRNA ligase (872 aa).

His567, His571, Cys669, and His673 together coordinate Zn(2+).

The protein belongs to the class-II aminoacyl-tRNA synthetase family. Zn(2+) serves as cofactor.

Its subcellular location is the cytoplasm. It carries out the reaction tRNA(Ala) + L-alanine + ATP = L-alanyl-tRNA(Ala) + AMP + diphosphate. In terms of biological role, catalyzes the attachment of alanine to tRNA(Ala) in a two-step reaction: alanine is first activated by ATP to form Ala-AMP and then transferred to the acceptor end of tRNA(Ala). Also edits incorrectly charged Ser-tRNA(Ala) and Gly-tRNA(Ala) via its editing domain. The sequence is that of Alanine--tRNA ligase from Streptococcus pyogenes serotype M28 (strain MGAS6180).